The chain runs to 263 residues: Small ribosomal subunit protein uS2 (263 aa).

This sequence belongs to the universal ribosomal protein uS2 family.

The sequence is that of Small ribosomal subunit protein uS2 from Hyphomonas neptunium (strain ATCC 15444).